Here is a 136-residue protein sequence, read N- to C-terminus: Histone H3 (136 aa).

Residues 1–43 (MARTKQTARKSTGGKAPRKQLASKAARKSAPSTGGVKKPHRYK) form a disordered region. Lys-5 carries the post-translational modification N6,N6,N6-trimethyllysine; alternate. Lys-5 is subject to N6,N6-dimethyllysine; alternate. N6-methyllysine; alternate is present on residues Lys-5 and Lys-10. Lys-10 is subject to N6-acetyllysine; alternate. Ser-11 is modified (phosphoserine). Lys-15 carries the post-translational modification N6,N6-dimethyllysine; alternate. N6-methyllysine; alternate occurs at positions 15, 19, 24, 28, and 37. An N6-acetyllysine; alternate mark is found at Lys-15, Lys-19, Lys-24, Lys-28, and Lys-37. 2 positions are modified to N6,N6,N6-trimethyllysine; alternate: Lys-28 and Lys-37. Residues Lys-28 and Lys-37 each carry the N6,N6-dimethyllysine; alternate modification. N6-acetyllysine occurs at positions 57 and 65. Lys-80 carries the post-translational modification N6,N6,N6-trimethyllysine; alternate. Lys-80 is subject to N6,N6-dimethyllysine; alternate. The residue at position 80 (Lys-80) is an N6-methyllysine; alternate.

The protein belongs to the histone H3 family. As to quaternary structure, the nucleosome is a histone octamer containing two molecules each of H2A, H2B, H3 and H4 assembled in one H3-H4 heterotetramer and two H2A-H2B heterodimers. The octamer wraps approximately 147 bp of DNA. Post-translationally, phosphorylated by IPL1 to form H3S10ph. H3S10ph promotes subsequent H3K14ac formation by GCN5 and is required for transcriptional activation through TBP recruitment to the promoters. In terms of processing, mono-, di- and trimethylated by the COMPASS complex to form H3K4me1/2/3. H3K4me activates gene expression by regulating transcription elongation and plays a role in telomere length maintenance. H3K4me enrichment correlates with transcription levels, and occurs in a 5' to 3' gradient with H3K4me3 enrichment at the 5'-end of genes, shifting to H3K4me2 and then H3K4me1. Methylated by SET2 to form H3K36me. H3K36me represses gene expression. Methylated by DOT1 to form H3K79me. H3K79me is required for association of SIR proteins with telomeric regions and for telomeric silencing. The COMPASS-mediated formation of H3K4me2/3 and the DOT1-mediated formation of H3K79me require H2BK123ub1. Acetylation of histone H3 leads to transcriptional activation. H3K14ac formation by GCN5 is promoted by H3S10ph. H3K14ac can also be formed by ESA1. H3K56ac formation occurs predominantly in newly synthesized H3 molecules during G1, S and G2/M of the cell cycle and may be involved in DNA repair.

It localises to the nucleus. The protein localises to the chromosome. Core component of nucleosome. Nucleosomes wrap and compact DNA into chromatin, limiting DNA accessibility to the cellular machineries which require DNA as a template. Histones thereby play a central role in transcription regulation, DNA repair, DNA replication and chromosomal stability. DNA accessibility is regulated via a complex set of post-translational modifications of histones, also called histone code, and nucleosome remodeling. The sequence is that of Histone H3 (HHT1) from Candida glabrata (strain ATCC 2001 / BCRC 20586 / JCM 3761 / NBRC 0622 / NRRL Y-65 / CBS 138) (Yeast).